The chain runs to 182 residues: Probable RNA 2'-phosphotransferase (182 aa).

Belongs to the KptA/TPT1 family.

Removes the 2'-phosphate from RNA via an intermediate in which the phosphate is ADP-ribosylated by NAD followed by a presumed transesterification to release the RNA and generate ADP-ribose 1''-2''-cyclic phosphate (APPR&gt;P). May function as an ADP-ribosylase. The chain is Probable RNA 2'-phosphotransferase from Pseudomonas paraeruginosa (strain DSM 24068 / PA7) (Pseudomonas aeruginosa (strain PA7)).